Reading from the N-terminus, the 900-residue chain is Alanine--tRNA ligase (900 aa).

The Zn(2+) site is built by histidine 567, histidine 571, cysteine 671, and histidine 675.

This sequence belongs to the class-II aminoacyl-tRNA synthetase family. It depends on Zn(2+) as a cofactor.

It is found in the cytoplasm. The catalysed reaction is tRNA(Ala) + L-alanine + ATP = L-alanyl-tRNA(Ala) + AMP + diphosphate. Its function is as follows. Catalyzes the attachment of alanine to tRNA(Ala) in a two-step reaction: alanine is first activated by ATP to form Ala-AMP and then transferred to the acceptor end of tRNA(Ala). Also edits incorrectly charged Ser-tRNA(Ala) and Gly-tRNA(Ala) via its editing domain. This is Alanine--tRNA ligase from Mycoplasma pneumoniae (strain ATCC 29342 / M129 / Subtype 1) (Mycoplasmoides pneumoniae).